We begin with the raw amino-acid sequence, 535 residues long: Probable galacturonosyltransferase 12 (535 aa).

Residues 1-37 are Cytoplasmic-facing; that stretch reads MQLHISPSLRHVTVVTGKGLREFIKVKVGSRRFSYQM. The helical; Signal-anchor for type II membrane protein transmembrane segment at 38–58 threads the bilayer; sequence VFYSLLFFTFLLRFVFVLSTV. The Lumenal portion of the chain corresponds to 59 to 535; that stretch reads DTIDGDPSPC…FIKSCHIRAS (477 aa). N-linked (GlcNAc...) asparagine glycans are attached at residues N397 and N430.

The protein belongs to the glycosyltransferase 8 family. Highly expressed in stems. Detected in roots, inflorescences, siliques, and leaves. Expressed in cells undergoing secondary wall thickening, including interfascicular fibers and primary and secondary xylem.

It localises to the golgi apparatus membrane. The protein operates within glycan metabolism; pectin biosynthesis. In terms of biological role, involved in pectin assembly and/or distribution, and in the synthesis of secondary wall glucuronoxylan. Probably involved in the synthesis of the glycosyl sequence at the glucuronoxylan reducing end. May be involved in synthesis of a complex glycan primer for xylan synthesis. The sequence is that of Probable galacturonosyltransferase 12 (GAUT12) from Arabidopsis thaliana (Mouse-ear cress).